Here is a 175-residue protein sequence, read N- to C-terminus: Viral interleukin-10 homolog (175 aa).

An N-terminal signal peptide occupies residues 1-19 (MLSVMVSSSLVLIVFFLGA). Cystine bridges form between Cys-37-Cys-127 and Cys-81-Cys-132. The N-linked (GlcNAc...) asparagine; by host glycan is linked to Asn-151.

It belongs to the IL-10 family. As to quaternary structure, homodimer; disulfide-linked.

It is found in the secreted. In terms of biological role, functional viral IL-10 homolog. Can bind to the human IL-10 receptor and compete with human IL-10 for binding sites. Requires both subunits of the human IL-10 receptor complex to induce signal transduction events and biological activities. IL-10 signaling pathway has several immunosuppressive activities that are exploited by the virus. Inhibits TLR-induced type I interferon production in host plasmacytoid dendritic cells. This chain is Viral interleukin-10 homolog (UL111A), found in Human cytomegalovirus (strain AD169) (HHV-5).